The following is a 663-amino-acid chain: DNA topoisomerase 1 (663 aa).

Positions 4 to 137 (SWLIITEKDN…TVKVDRVRYS (134 aa)) constitute a Toprim domain. Mg(2+) contacts are provided by E10 and D106. In terms of domain architecture, Topo IA-type catalytic spans 155 to 558 (DFNLANAALA…ESREMLLQIL (404 aa)). Residues 193–198 (SVGRVQ) are interaction with DNA. Y306 serves as the catalytic O-(5'-phospho-DNA)-tyrosine intermediate. The C4-type 1 zinc-finger motif lies at 583–610 (CPECGGELVVRQSKAGKRFIGCSNYPDC). Residues 629 to 653 (CKEHEIKEVKIRTKKGYWNLGCPYC) form a C4-type 2; atypical zinc finger.

The protein belongs to the type IA topoisomerase family. As to quaternary structure, monomer. The cofactor is Mg(2+).

The catalysed reaction is ATP-independent breakage of single-stranded DNA, followed by passage and rejoining.. Its function is as follows. Releases the supercoiling and torsional tension of DNA, which is introduced during the DNA replication and transcription, by transiently cleaving and rejoining one strand of the DNA duplex. Introduces a single-strand break via transesterification at a target site in duplex DNA. The scissile phosphodiester is attacked by the catalytic tyrosine of the enzyme, resulting in the formation of a DNA-(5'-phosphotyrosyl)-enzyme intermediate and the expulsion of a 3'-OH DNA strand. The free DNA strand then undergoes passage around the unbroken strand, thus removing DNA supercoils. Finally, in the religation step, the DNA 3'-OH attacks the covalent intermediate to expel the active-site tyrosine and restore the DNA phosphodiester backbone. This Archaeoglobus fulgidus (strain ATCC 49558 / DSM 4304 / JCM 9628 / NBRC 100126 / VC-16) protein is DNA topoisomerase 1.